Reading from the N-terminus, the 782-residue chain is General transcription and DNA repair factor IIH helicase/translocase subunit XPB (782 aa).

The segment covering 1–11 has biased composition (basic and acidic residues); the sequence is MGKRDRADREK. The tract at residues 1-51 is disordered; sequence MGKRDRADREKKKSKKRHYEDEEDEEDDAPGNDTQEAVPSAAGKQVDESGT. Positions 6–18 match the Nuclear localization signal motif; sequence RADREKKKSKKRH. The span at 21-30 shows a compositional bias: acidic residues; that stretch reads DEEDEEDDAP. The region spanning 327–488 is the Helicase ATP-binding domain; sequence MFGNGRARSG…DLNFLIGPKL (162 aa). 340 to 347 is an ATP binding site; that stretch reads LPCGAGKS. The short motif at 441–444 is the DEVH box element; the sequence is DEVH. The 161-residue stretch at 542 to 702 folds into the Helicase C-terminal domain; it reads RACQFLIKFH…LAGMEEEDLA (161 aa). The residue at position 686 (S686) is a Phosphoserine. At S751 the chain carries Phosphoserine; by CK2.

It belongs to the helicase family. RAD25/XPB subfamily. Component of the 7-subunit TFIIH core complex composed of XPB/ERCC3, XPD/ERCC2, GTF2H1, GTF2H2, GTF2H3, GTF2H4 and GTF2H5, which is active in NER. The core complex associates with the 3-subunit CDK-activating kinase (CAK) module composed of CCNH/cyclin H, CDK7 and MNAT1 to form the 10-subunit holoenzyme (holo-TFIIH) active in transcription. Interacts with PUF60. Interacts with ATF7IP. Interacts with KAT2A; leading to KAT2A recruitment to promoters and acetylation of histones. Part of TBP-based Pol II pre-initiation complex (PIC), in which Pol II core assembles with general transcription factors and other specific initiation factors including GTF2E1, GTF2E2, GTF2F1, GTF2F2, TCEA1, ERCC2, ERCC3, GTF2H2, GTF2H3, GTF2H4, GTF2H5, GTF2A1, GTF2A2, GTF2B and TBP; this large multi-subunit PIC complex mediates DNA unwinding and targets Pol II core to the transcription start site where the first phosphodiester bond forms. In terms of processing, phosphorylation on Ser-751 by CK2 controls the 5'-excision activity of ERCC1-XPF endonuclease; phosphorylated protein inhibits the excision activity and thus NER. Dephosphorylation reactivates the 5'-excision step. Phosphorylation has no effect on transcription or the 3'-5' helicase activity.

The protein resides in the nucleus. It carries out the reaction Couples ATP hydrolysis with the unwinding of duplex DNA by translocating in the 3'-5' direction.. The enzyme catalyses ATP + H2O = ADP + phosphate + H(+). Its activity is regulated as follows. Phosphorylation on Ser-751 by CK2 controls the 5'-excision activity of ERCC1-XPF endonuclease; phosphorylated protein inhibits the excision activity and thus NER. ATPase activity is stimulated by TFIIH subunit p52 (GTF2H4). DNA translocase activity by this subunit in TFIIH is stimulated by XPA, ERCC5/XPG and XFP plus ERCC1. Functionally, ATP-dependent 3'-5' DNA helicase/translocase; binds dsDNA rather than ssDNA, unzipping it in a translocase rather than classical helicase activity. Component of the general transcription and DNA repair factor IIH (TFIIH) core complex. When complexed to CDK-activating kinase (CAK), involved in RNA transcription by RNA polymerase II. The ATPase activity of XPB/ERCC3, but not its helicase activity, is required for DNA opening; it may wrap around the damaged DNA wedging it open, causing localized melting and twisting that allows XPD/ERCC2 helicase to anchor. The ATP-dependent helicase activity of XPB/ERCC3 may be required for promoter escape. Also involved in transcription-coupled nucleotide excision repair (NER) of damaged DNA. In NER, TFIIH acts by opening DNA around the lesion to allow the excision of the damaged oligonucleotide and its replacement by a new DNA fragment. The structure of the TFIIH transcription complex differs from the NER-TFIIH complex; large movements by XPD/ERCC2 and XPB/ERCC3 are stabilized by XPA. The polypeptide is General transcription and DNA repair factor IIH helicase/translocase subunit XPB (ERCC3) (Bos taurus (Bovine)).